Consider the following 391-residue polypeptide: Nuclear hormone receptor family member nhr-218 (391 aa).

A DNA-binding region (nuclear receptor) is located at residues 17–93 (PIPCQICTYQ…MGMKAEKIQQ (77 aa)). 2 NR C4-type zinc fingers span residues 20–40 (CQICTYQSHGVNFNVMTCRAC) and 56–76 (CKTRKNDCRIDSTERHFCRLC). The NR LBD domain occupies 146 to 391 (SRNYSDSPLT…DNFCNLFAMK (246 aa)).

The protein belongs to the nuclear hormone receptor family.

The protein localises to the nucleus. Its function is as follows. Orphan nuclear receptor. The chain is Nuclear hormone receptor family member nhr-218 (nhr-218) from Caenorhabditis elegans.